Reading from the N-terminus, the 471-residue chain is MAGEMTILGSAVLTLLLAGYLAQQYLPLPTPKVIGIDLGTTYCSVGVFFPGTGKVKVIPDENGHISIPSMVSFTDGDVYVGYESLELADSNPQNTIYDAKRFIGKIFTPEELEAEVGRYPFKVLHRNGMAEFSVTSNETIIVSPEFVGSRLLLKLKEMAEEYLGMPVANAVISVPAEFDLQQRNSTIQAANLAGLKILRVINEPTAAAMAYGLHKVDVFYVLVIDLGGGTLDVSLLNKQGGMFLTRAMSGNNKLGGQDFNQRLLQHLYKEIYQTYGFLPSRKEEIHRLRQAVEMVKLNLTIHQSAQVSVLLTVEGKDSKEPQNGDSELPKDQLTPGDGHHVNRVFRPGLSESKSGKSQVLFETEVSRKLFDALNEDLFQKILVPIQQVLKEGLLDKTEIDEVVLVGGSTRIPRIRQVIQEFFGKDPNTSVDPDLAVVTGVAIQAGIDGGSWPLQVSALEIPNKHLQKTNFN.

An N-terminal signal peptide occupies residues 1-22 (MAGEMTILGSAVLTLLLAGYLA). Basic and acidic residues predominate over residues 317-330 (DSKEPQNGDSELPK). The interval 317 to 350 (DSKEPQNGDSELPKDQLTPGDGHHVNRVFRPGLS) is disordered.

This sequence belongs to the heat shock protein 70 family. Binds UBQLN2.

It is found in the microsome. Its subcellular location is the endoplasmic reticulum. In terms of biological role, has peptide-independent ATPase activity. The polypeptide is Heat shock 70 kDa protein 13 (Hspa13) (Mus musculus (Mouse)).